Reading from the N-terminus, the 62-residue chain is Beta-defensin 10 (62 aa).

The N-terminal stretch at 1 to 22 is a signal peptide; that stretch reads MRLHHLLLLLLLVVLSSGSGFT. Position 23 is a pyrrolidone carboxylic acid (glutamine 23). 3 disulfides stabilise this stretch: cysteine 31-cysteine 60, cysteine 38-cysteine 53, and cysteine 43-cysteine 61.

The protein belongs to the beta-defensin family. As to expression, neutrophilic granules.

It localises to the secreted. Functionally, has bactericidal activity. Active against E.coli ML35 and S.aureus 502A. The chain is Beta-defensin 10 (DEFB10) from Bos taurus (Bovine).